Here is a 229-residue protein sequence, read N- to C-terminus: Enolase-phosphatase E1 (229 aa).

Positions 206–229 are disordered; sequence DRDPASHHPQVQRFDDIHPEQIPA. The span at 218–229 shows a compositional bias: basic and acidic residues; that stretch reads RFDDIHPEQIPA.

It belongs to the HAD-like hydrolase superfamily. MasA/MtnC family. In terms of assembly, monomer. The cofactor is Mg(2+).

The catalysed reaction is 5-methylsulfanyl-2,3-dioxopentyl phosphate + H2O = 1,2-dihydroxy-5-(methylsulfanyl)pent-1-en-3-one + phosphate. Its pathway is amino-acid biosynthesis; L-methionine biosynthesis via salvage pathway; L-methionine from S-methyl-5-thio-alpha-D-ribose 1-phosphate: step 3/6. It functions in the pathway amino-acid biosynthesis; L-methionine biosynthesis via salvage pathway; L-methionine from S-methyl-5-thio-alpha-D-ribose 1-phosphate: step 4/6. In terms of biological role, bifunctional enzyme that catalyzes the enolization of 2,3-diketo-5-methylthiopentyl-1-phosphate (DK-MTP-1-P) into the intermediate 2-hydroxy-3-keto-5-methylthiopentenyl-1-phosphate (HK-MTPenyl-1-P), which is then dephosphorylated to form the acireductone 1,2-dihydroxy-3-keto-5-methylthiopentene (DHK-MTPene). In Klebsiella oxytoca, this protein is Enolase-phosphatase E1.